We begin with the raw amino-acid sequence, 353 residues long: NADH-quinone oxidoreductase subunit H (353 aa).

9 helical membrane-spanning segments follow: residues 8 to 28 (LLVY…IFIW), 75 to 95 (GVFW…FAAI), 108 to 128 (IGIL…FMAG), 148 to 168 (VSYE…TGSL), 179 to 199 (VPFI…AMAE), 229 to 249 (LFYL…TTLF), 258 to 278 (LHPV…IIWV), 297 to 317 (FLLP…LIAP), and 319 to 339 (INTA…VLLF).

The protein belongs to the complex I subunit 1 family. In terms of assembly, NDH-1 is composed of 14 different subunits. Subunits NuoA, H, J, K, L, M, N constitute the membrane sector of the complex.

The protein resides in the cell membrane. It carries out the reaction a quinone + NADH + 5 H(+)(in) = a quinol + NAD(+) + 4 H(+)(out). Its function is as follows. NDH-1 shuttles electrons from NADH, via FMN and iron-sulfur (Fe-S) centers, to quinones in the respiratory chain. The immediate electron acceptor for the enzyme in this species is believed to be ubiquinone. Couples the redox reaction to proton translocation (for every two electrons transferred, four hydrogen ions are translocated across the cytoplasmic membrane), and thus conserves the redox energy in a proton gradient. This subunit may bind ubiquinone. The polypeptide is NADH-quinone oxidoreductase subunit H (Dehalococcoides mccartyi (strain CBDB1)).